The following is a 407-amino-acid chain: S-adenosylmethionine synthase (407 aa).

An ATP-binding site is contributed by His15. Mg(2+) is bound at residue Asp17. Glu43 is a binding site for K(+). Glu56 and Gln99 together coordinate L-methionine. Positions 99–109 (QSPDIARGVDT) are flexible loop. A disordered region spans residues 112 to 131 (ERRGGGTAPGGPGDELDRQG). Residues 179–181 (DGK), 252–253 (RF), Asp261, 267–268 (RK), Ala284, and Lys288 contribute to the ATP site. An L-methionine-binding site is contributed by Asp261. Residue Lys292 participates in L-methionine binding.

This sequence belongs to the AdoMet synthase family. Homotetramer; dimer of dimers. Mg(2+) is required as a cofactor. K(+) serves as cofactor.

The protein localises to the cytoplasm. It catalyses the reaction L-methionine + ATP + H2O = S-adenosyl-L-methionine + phosphate + diphosphate. Its pathway is amino-acid biosynthesis; S-adenosyl-L-methionine biosynthesis; S-adenosyl-L-methionine from L-methionine: step 1/1. Its function is as follows. Catalyzes the formation of S-adenosylmethionine (AdoMet) from methionine and ATP. The overall synthetic reaction is composed of two sequential steps, AdoMet formation and the subsequent tripolyphosphate hydrolysis which occurs prior to release of AdoMet from the enzyme. This Streptomyces fradiae (Streptomyces roseoflavus) protein is S-adenosylmethionine synthase.